The primary structure comprises 382 residues: UDP-4-amino-4-deoxy-L-arabinose--oxoglutarate aminotransferase (382 aa).

Residue lysine 182 is modified to N6-(pyridoxal phosphate)lysine.

It belongs to the DegT/DnrJ/EryC1 family. ArnB subfamily. In terms of assembly, homodimer. The cofactor is pyridoxal 5'-phosphate.

The catalysed reaction is UDP-4-amino-4-deoxy-beta-L-arabinose + 2-oxoglutarate = UDP-beta-L-threo-pentopyranos-4-ulose + L-glutamate. The protein operates within nucleotide-sugar biosynthesis; UDP-4-deoxy-4-formamido-beta-L-arabinose biosynthesis; UDP-4-deoxy-4-formamido-beta-L-arabinose from UDP-alpha-D-glucuronate: step 2/3. It functions in the pathway bacterial outer membrane biogenesis; lipopolysaccharide biosynthesis. Catalyzes the conversion of UDP-4-keto-arabinose (UDP-Ara4O) to UDP-4-amino-4-deoxy-L-arabinose (UDP-L-Ara4N). The modified arabinose is attached to lipid A and is required for resistance to polymyxin and cationic antimicrobial peptides. The sequence is that of UDP-4-amino-4-deoxy-L-arabinose--oxoglutarate aminotransferase from Pectobacterium atrosepticum (strain SCRI 1043 / ATCC BAA-672) (Erwinia carotovora subsp. atroseptica).